A 336-amino-acid polypeptide reads, in one-letter code: 4-hydroxy-2-oxovalerate aldolase (336 aa).

The region spanning I5–M255 is the Pyruvate carboxyltransferase domain. R13–D14 is a substrate binding site. D14 is a binding site for Mn(2+). H17 (proton acceptor) is an active-site residue. The substrate site is built by S167 and H194. Mn(2+) contacts are provided by H194 and H196. Y285 is a binding site for substrate.

This sequence belongs to the 4-hydroxy-2-oxovalerate aldolase family.

It carries out the reaction (S)-4-hydroxy-2-oxopentanoate = acetaldehyde + pyruvate. The protein is 4-hydroxy-2-oxovalerate aldolase (mhpE) of Carboxydothermus hydrogenoformans (strain ATCC BAA-161 / DSM 6008 / Z-2901).